A 589-amino-acid chain; its full sequence is Protein kinase G11A (589 aa).

Residues 1–167 (MASKAMPRAP…SACSSISSVT (167 aa)) are disordered. Composition is skewed to polar residues over residues 15–36 (NLQS…SPSK) and 63–76 (TQHQ…TGSN). A compositionally biased stretch (basic and acidic residues) spans 91–100 (RLADEEKGVV). Positions 142-165 (SSSRCRPSTSSDVSDESACSSISS) are enriched in low complexity. Residues 195 to 533 (FKLLKKLGCG…ATEIKQHPFF (339 aa)) enclose the Protein kinase domain. Residues 201 to 209 (LGCGDIGSV) and K224 each bind ATP. D320 serves as the catalytic Proton acceptor. The interval 551–589 (RPVEIERPPKQPVSTSEPAAAPSDAAQKSSDSYLEFDFF) is disordered.

Belongs to the protein kinase superfamily. Ser/Thr protein kinase family.

It catalyses the reaction L-seryl-[protein] + ATP = O-phospho-L-seryl-[protein] + ADP + H(+). The catalysed reaction is L-threonyl-[protein] + ATP = O-phospho-L-threonyl-[protein] + ADP + H(+). May play a role in the regulation of metabolism and signal transduction processes. This Oryza sativa subsp. japonica (Rice) protein is Protein kinase G11A.